The chain runs to 188 residues: MGVDIRHNKDRKVRRKEPKSQDIYLRLLVKLYRFLARRTNSTFNQVVLKRLFMSRTNRPPLSLSRMIRKMKLPGREGKTAVVVGTITDDVRVQEVPKLKVCALRVSSRARSRILKAGGKILTFDQLALDSPKGCGTVLLSGPRKGREVYRHFGKAPGTPHSHTKPYVRSKGRKFERARGRRASRGYKN.

A Glycyl lysine isopeptide (Lys-Gly) (interchain with G-Cter in SUMO2) cross-link involves residue lysine 119. Serine 130 carries the phosphoserine modification. Positions 150 to 188 (RHFGKAPGTPHSHTKPYVRSKGRKFERARGRRASRGYKN) are disordered. At threonine 158 the chain carries Phosphothreonine. Composition is skewed to basic residues over residues 161–171 (SHTKPYVRSKG) and 178–188 (RGRRASRGYKN). A Glycyl lysine isopeptide (Lys-Gly) (interchain with G-Cter in SUMO2) cross-link involves residue lysine 164.

The protein belongs to the eukaryotic ribosomal protein eL18 family. Component of the large ribosomal subunit.

It is found in the cytoplasm. Its subcellular location is the cytosol. The protein resides in the rough endoplasmic reticulum. Functionally, component of the large ribosomal subunit. The ribosome is a large ribonucleoprotein complex responsible for the synthesis of proteins in the cell. This chain is Large ribosomal subunit protein eL18 (RPL18), found in Bos taurus (Bovine).